Reading from the N-terminus, the 441-residue chain is MIDVKLLRSNRELFEKNCEYRGVDKAPVEDFFRLDEEWRSINRELNGLRSQKNRETRKIAELIKNNGDASAEKKAVEDINARISDLENKLKKIEEERDRILWTIPNLVHESVPVCFGDENNQLVRYVGHAKVFRDDIEEFKKNSGNSQDYEVLDERPKSHVDLGLDLNVIDLESAARISGSRFYFIKNRLLKLEMALENYAVDFLSQRGFSIVEPPYMLNLESMRGATDLETFKDTLYKIEGEDLYLIATSEHSIAAMLSNQFLEEKDLPLRVAGISACFRREAGAHGKDTKGIFRVHQFNKIEQFVFCKPEDSWDFLEEILGNAEAIYRSLGIPYRVVNVCSGELGRLAAKKYDIEAWFPAQGKFREIVSASNDTDYQARSLNIKYRTSEGNRFVHTLNSTAIATTRILVAIMENFQEGDRIRIPDVLVPYTGFQYIEKG.

250–252 (TSE) contacts L-serine. Residues 281 to 283 (RRE) and Val-297 each bind ATP. An L-serine-binding site is contributed by Glu-304. ATP is bound at residue 368–371 (EIVS). Thr-402 is an L-serine binding site.

The protein belongs to the class-II aminoacyl-tRNA synthetase family. Type-1 seryl-tRNA synthetase subfamily. In terms of assembly, homodimer. The tRNA molecule binds across the dimer.

Its subcellular location is the cytoplasm. The catalysed reaction is tRNA(Ser) + L-serine + ATP = L-seryl-tRNA(Ser) + AMP + diphosphate + H(+). It catalyses the reaction tRNA(Sec) + L-serine + ATP = L-seryl-tRNA(Sec) + AMP + diphosphate + H(+). The protein operates within aminoacyl-tRNA biosynthesis; selenocysteinyl-tRNA(Sec) biosynthesis; L-seryl-tRNA(Sec) from L-serine and tRNA(Sec): step 1/1. Catalyzes the attachment of serine to tRNA(Ser). Is also able to aminoacylate tRNA(Sec) with serine, to form the misacylated tRNA L-seryl-tRNA(Sec), which will be further converted into selenocysteinyl-tRNA(Sec). This is Serine--tRNA ligase from Thermoplasma acidophilum (strain ATCC 25905 / DSM 1728 / JCM 9062 / NBRC 15155 / AMRC-C165).